The chain runs to 743 residues: Coiled-coil domain-containing protein 30 (743 aa).

2 stretches are compositionally biased toward basic and acidic residues: residues 1 to 22 and 133 to 193; these read MSQE…REKQ and SPKE…MKPE. 4 disordered regions span residues 1–25, 114–193, 208–233, and 695–715; these read MSQE…QLAS, ENIC…MKPE, SLLQ…GDKL, and SKEA…LVCS. Coiled coils occupy residues 21–98 and 165–580; these read KQLA…QLNH and REGQ…LIHS. Positions 208 to 223 are enriched in low complexity; the sequence is SLLQSQSSGDSSDDSG.

The protein belongs to the prefoldin subunit beta family.

This Macaca fascicularis (Crab-eating macaque) protein is Coiled-coil domain-containing protein 30 (CCDC30).